The following is a 380-amino-acid chain: Cytochrome b (380 aa).

4 consecutive transmembrane segments (helical) span residues 33–53 (FGSL…FLAM), 77–98 (WLIR…YLHV), 113–133 (WNIG…GYVL), and 178–198 (FFAF…IHLL). Heme b-binding residues include His-83 and His-97. Heme b is bound by residues His-182 and His-196. An a ubiquinone-binding site is contributed by His-201. Helical transmembrane passes span 226–246 (YKDL…ALFS), 288–308 (LGGV…PMLH), 320–340 (PSQI…WIGG), and 347–367 (FVLI…IALP).

It belongs to the cytochrome b family. As to quaternary structure, the cytochrome bc1 complex contains 3 respiratory subunits (MT-CYB, CYC1 and UQCRFS1), 2 core proteins (UQCRC1 and UQCRC2) and probably 6 low-molecular weight proteins. Heme b is required as a cofactor.

The protein localises to the mitochondrion inner membrane. Its function is as follows. Component of the ubiquinol-cytochrome c reductase complex (complex III or cytochrome b-c1 complex) that is part of the mitochondrial respiratory chain. The b-c1 complex mediates electron transfer from ubiquinol to cytochrome c. Contributes to the generation of a proton gradient across the mitochondrial membrane that is then used for ATP synthesis. The polypeptide is Cytochrome b (mt-cyb) (Acipenser sinensis (Chinese sturgeon)).